A 264-amino-acid chain; its full sequence is Probable glycerophosphodiester phosphodiesterase 2 (264 aa).

Residues 17-255 (RIAMAHRGFT…DRADLLRDVL (239 aa)) enclose the GP-PDE domain. Catalysis depends on His22, which acts as the Proton acceptor. Residues Glu50, Asp52, and His65 each contribute to the a divalent metal cation site. His65 serves as the catalytic Proton donor.

The protein belongs to the glycerophosphoryl diester phosphodiesterase family. It depends on a divalent metal cation as a cofactor.

It carries out the reaction a sn-glycero-3-phosphodiester + H2O = an alcohol + sn-glycerol 3-phosphate + H(+). In terms of biological role, glycerophosphodiester phosphodiesterase hydrolyzes glycerophosphodiesters into glycerol-3-phosphate (G3P) and the corresponding alcohol. In Mycobacterium tuberculosis (strain ATCC 25618 / H37Rv), this protein is Probable glycerophosphodiester phosphodiesterase 2.